Consider the following 514-residue polypeptide: Peptide chain release factor 3 (514 aa).

Residues 8-268 form the tr-type G domain; it reads KKRRTFAIIS…TFLEFAPEPH (261 aa). GTP is bound by residues 17–24, 85–89, and 139–142; these read SHPDAGKT, DTPGH, and NKLD.

This sequence belongs to the TRAFAC class translation factor GTPase superfamily. Classic translation factor GTPase family. PrfC subfamily.

The protein localises to the cytoplasm. Increases the formation of ribosomal termination complexes and stimulates activities of RF-1 and RF-2. It binds guanine nucleotides and has strong preference for UGA stop codons. It may interact directly with the ribosome. The stimulation of RF-1 and RF-2 is significantly reduced by GTP and GDP, but not by GMP. This Streptococcus pyogenes serotype M49 (strain NZ131) protein is Peptide chain release factor 3.